Reading from the N-terminus, the 271-residue chain is MVEIHPTAIVSNKAKLGTNVKVGPFSIIEDEVEIGDNTVIHSSVKIRNYTKIGSNCEIFEGCVIGNIPQHLGFKGEISYVEIGNNTVLREYCTVHRGTSFDDGITRIGNNTYLMAYVHIAHDCKVGDNTILANCVTLAGHVKIGNYVFVGGLTPIHQFCRIGDYAMVGGASAVDKDIPPFTRASKNHVLLYGLNLVGLKRRGFSSETIKLLKEAYRILFRTSPTLAEGIKEVEEKLPKTKEIQMLLDFVKTTKRGIAPEASKRKLLISDEE.

The protein belongs to the transferase hexapeptide repeat family. LpxA subfamily. In terms of assembly, homotrimer.

Its subcellular location is the cytoplasm. It carries out the reaction a (3R)-hydroxyacyl-[ACP] + UDP-N-acetyl-alpha-D-glucosamine = a UDP-3-O-[(3R)-3-hydroxyacyl]-N-acetyl-alpha-D-glucosamine + holo-[ACP]. The protein operates within glycolipid biosynthesis; lipid IV(A) biosynthesis; lipid IV(A) from (3R)-3-hydroxytetradecanoyl-[acyl-carrier-protein] and UDP-N-acetyl-alpha-D-glucosamine: step 1/6. Functionally, involved in the biosynthesis of lipid A, a phosphorylated glycolipid that anchors the lipopolysaccharide to the outer membrane of the cell. The polypeptide is Acyl-[acyl-carrier-protein]--UDP-N-acetylglucosamine O-acyltransferase (Sulfurihydrogenibium sp. (strain YO3AOP1)).